Consider the following 370-residue polypeptide: Cyanuric acid amidohydrolase (370 aa).

An RU A region spans residues 1 to 106; that stretch reads MRTTSVGVFK…TVFTRREVER (106 aa). Residues Arg-54 and 85–86 each bind substrate; that span reads SG. The RU B stretch occupies residues 115-251; sequence RLSIGMAHTR…NVVIVLGNSA (137 aa). Residue Lys-165 is part of the active site. Residues Arg-197 and 234–235 each bind substrate; that span reads SA. Catalysis depends on Ser-234, which acts as the Nucleophile. The tract at residues 257 to 370 is RU C; the sequence is FEIGHAVMND…PVAVIARLSD (114 aa). Residue Glu-302 coordinates Mg(2+). Residues Arg-329 and 348-349 each bind substrate; that span reads SG. Ala-351, Gln-354, Gly-355, Pro-356, and Gly-359 together coordinate Mg(2+).

This sequence belongs to the cyclic amide hydrolase (CyAH) family. In terms of assembly, homotetramer.

The catalysed reaction is cyanurate + H2O = 1-carboxybiuret + H(+). Its pathway is xenobiotic degradation; atrazine degradation; biuret from cyanurate: step 1/1. Inhibited by barbituric acid. In terms of biological role, responsible for the hydrolysis of cyanuric acid, an intermediate formed during catabolism of s-triazine based compounds in herbicides such as atrazine and polymers such as melamine. Catalyzes the hydrolytic opening of the s-triazine ring of cyanuric acid (2,4,6-trihydroxy-s-triazine) to yield carbon dioxide and carboxybiuret, which spontaneously decarboxylates to biuret. This chain is Cyanuric acid amidohydrolase, found in Bradyrhizobium diazoefficiens (strain JCM 10833 / BCRC 13528 / IAM 13628 / NBRC 14792 / USDA 110).